The chain runs to 394 residues: Elongation factor Tu (394 aa).

Positions 10–204 (KPHVNIGTIG…AVDSYIPQPV (195 aa)) constitute a tr-type G domain. A G1 region spans residues 19–26 (GHVDHGKT). 19–26 (GHVDHGKT) serves as a coordination point for GTP. A Mg(2+)-binding site is contributed by Thr26. Positions 60–64 (GITIS) are G2. The segment at 81 to 84 (DCPG) is G3. GTP contacts are provided by residues 81–85 (DCPGH) and 136–139 (NKID). The segment at 136–139 (NKID) is G4. The G5 stretch occupies residues 174-176 (SAL).

This sequence belongs to the TRAFAC class translation factor GTPase superfamily. Classic translation factor GTPase family. EF-Tu/EF-1A subfamily. In terms of assembly, monomer.

The protein resides in the cytoplasm. It carries out the reaction GTP + H2O = GDP + phosphate + H(+). GTP hydrolase that promotes the GTP-dependent binding of aminoacyl-tRNA to the A-site of ribosomes during protein biosynthesis. This is Elongation factor Tu from Rickettsia peacockii (strain Rustic).